The primary structure comprises 779 residues: Phosphatidylinositol 4-phosphate 5-kinase 4 (779 aa).

The interval 20-61 is disordered; the sequence is QQAKKRANSIFGTVSVAPQTDDDATTTTEENDDETSTNRSSI. Residues 39–54 are compositionally biased toward acidic residues; that stretch reads TDDDATTTTEENDDET. MORN repeat units follow at residues 77–99, 100–122, 123–145, 146–168, 169–191, 192–214, 215–237, and 238–259; these read YTGQ…DGCM, YIGD…SGAT, YEGE…SGDT, YKGQ…NGDV, YDGE…DGSY, YMGE…DGNR, YDGF…DGSF, and YVGH…SGDD. The 394-residue stretch at 382–775 folds into the PIPK domain; sequence TISKGHRNYE…RFRDFIFKVF (394 aa). Positions 735–756 are activation loop; it reads YDISKKLEHAYKSIQYDPTSIS.

The enzyme catalyses a 1,2-diacyl-sn-glycero-3-phospho-(1D-myo-inositol 4-phosphate) + ATP = a 1,2-diacyl-sn-glycero-3-phospho-(1D-myo-inositol-4,5-bisphosphate) + ADP + H(+). The chain is Phosphatidylinositol 4-phosphate 5-kinase 4 (PIP5K4) from Arabidopsis thaliana (Mouse-ear cress).